A 118-amino-acid chain; its full sequence is Membrane-anchored ubiquitin-fold protein 3 (118 aa).

The 67-residue stretch at 7-73 (IDIKFRLYDG…LENNKTVGQC (67 aa)) folds into the Ubiquitin-like domain. A lipid anchor (S-palmitoyl cysteine) is attached at cysteine 113. At cysteine 115 the chain carries Cysteine methyl ester. Residue cysteine 115 is the site of S-geranylgeranyl cysteine attachment. A propeptide spans 116–118 (TIL) (removed in mature form).

As to expression, ubiquitous, but three fold higher expression in senescing leaves.

The protein localises to the cell membrane. Its function is as follows. May serve as docking site to facilitate the association of other proteins to the plasma membrane. The sequence is that of Membrane-anchored ubiquitin-fold protein 3 (MUB3) from Arabidopsis thaliana (Mouse-ear cress).